A 179-amino-acid polypeptide reads, in one-letter code: Ubiquitin-conjugating enzyme E2 C (179 aa).

Ala-2 carries the N-acetylalanine modification. Ser-3 is modified (phosphoserine). In terms of domain architecture, UBC core spans 30 to 175 (PVGKRLQQEL…LQETYSKQVS (146 aa)). Cys-114 serves as the catalytic Glycyl thioester intermediate.

Belongs to the ubiquitin-conjugating enzyme family. Component of the APC/C complex, composed of at least 14 distinct subunits that assemble into a complex of at least 19 chains with a combined molecular mass of around 1.2 MDa. Within this complex, directly interacts with ANAPC2. Post-translationally, autoubiquitinated by the APC/C complex, leading to its degradation by the proteasome. Its degradation plays a central role in APC/C regulation, allowing cyclin-A accumulation before S phase entry. APC/C substrates inhibit the autoubiquitination of UBE2C/UBCH10 but not its E2 function, hence APC/C remaining active until its substrates have been destroyed.

It catalyses the reaction S-ubiquitinyl-[E1 ubiquitin-activating enzyme]-L-cysteine + [E2 ubiquitin-conjugating enzyme]-L-cysteine = [E1 ubiquitin-activating enzyme]-L-cysteine + S-ubiquitinyl-[E2 ubiquitin-conjugating enzyme]-L-cysteine.. The catalysed reaction is S-ubiquitinyl-[E1 ubiquitin-activating enzyme]-L-cysteine + [acceptor protein]-L-lysine = [E1 ubiquitin-activating enzyme]-L-cysteine + N(6)-monoubiquitinyl-[acceptor protein]-L-lysine.. It functions in the pathway protein modification; protein ubiquitination. Its function is as follows. Accepts ubiquitin from the E1 complex and catalyzes its covalent attachment to other proteins. In vitro catalyzes 'Lys-11'- and 'Lys-48'-linked polyubiquitination. Acts as an essential factor of the anaphase promoting complex/cyclosome (APC/C), a cell cycle-regulated ubiquitin ligase that controls progression through mitosis. Acts by initiating 'Lys-11'-linked polyubiquitin chains on APC/C substrates, leading to the degradation of APC/C substrates by the proteasome and promoting mitotic exit. This chain is Ubiquitin-conjugating enzyme E2 C (Ube2c), found in Mus musculus (Mouse).